We begin with the raw amino-acid sequence, 205 residues long: V-type ATP synthase subunit E (205 aa).

Belongs to the V-ATPase E subunit family.

Produces ATP from ADP in the presence of a proton gradient across the membrane. In Treponema denticola (strain ATCC 35405 / DSM 14222 / CIP 103919 / JCM 8153 / KCTC 15104), this protein is V-type ATP synthase subunit E.